Reading from the N-terminus, the 199-residue chain is Small ribosomal subunit protein uS5 (199 aa).

The interval 1–29 is disordered; sequence MATAGRRGGAASERRERRESRRQEASPEK. Residues 12–27 are compositionally biased toward basic and acidic residues; sequence SERRERRESRRQEASP. The S5 DRBM domain maps to 32 to 95; that stretch reads FLERVVTINR…EEAKKHFFTV (64 aa).

This sequence belongs to the universal ribosomal protein uS5 family. In terms of assembly, part of the 30S ribosomal subunit. Contacts proteins S4 and S8.

With S4 and S12 plays an important role in translational accuracy. In terms of biological role, located at the back of the 30S subunit body where it stabilizes the conformation of the head with respect to the body. This Acidothermus cellulolyticus (strain ATCC 43068 / DSM 8971 / 11B) protein is Small ribosomal subunit protein uS5.